The primary structure comprises 306 residues: Aspartate carbamoyltransferase catalytic subunit (306 aa).

Residues Arg55 and Thr56 each coordinate carbamoyl phosphate. Lys84 contacts L-aspartate. The carbamoyl phosphate site is built by Arg105, His133, and Gln136. L-aspartate-binding residues include Arg166 and Arg227. Carbamoyl phosphate contacts are provided by Leu265 and Pro266.

This sequence belongs to the aspartate/ornithine carbamoyltransferase superfamily. ATCase family. Heterododecamer (2C3:3R2) of six catalytic PyrB chains organized as two trimers (C3), and six regulatory PyrI chains organized as three dimers (R2).

It carries out the reaction carbamoyl phosphate + L-aspartate = N-carbamoyl-L-aspartate + phosphate + H(+). It participates in pyrimidine metabolism; UMP biosynthesis via de novo pathway; (S)-dihydroorotate from bicarbonate: step 2/3. Its function is as follows. Catalyzes the condensation of carbamoyl phosphate and aspartate to form carbamoyl aspartate and inorganic phosphate, the committed step in the de novo pyrimidine nucleotide biosynthesis pathway. The polypeptide is Aspartate carbamoyltransferase catalytic subunit (Aeromonas salmonicida (strain A449)).